Consider the following 151-residue polypeptide: Transcriptional regulator MraZ (151 aa).

SpoVT-AbrB domains are found at residues 5–56 (THRH…PLPT) and 85–128 (SEEL…DAAR).

The protein belongs to the MraZ family. In terms of assembly, forms oligomers.

The protein resides in the cytoplasm. The protein localises to the nucleoid. The sequence is that of Transcriptional regulator MraZ from Acidithiobacillus ferrooxidans (strain ATCC 23270 / DSM 14882 / CIP 104768 / NCIMB 8455) (Ferrobacillus ferrooxidans (strain ATCC 23270)).